A 702-amino-acid chain; its full sequence is Ribosomal RNA large subunit methyltransferase K/L (702 aa).

In terms of domain architecture, THUMP spans 43–154 (LIYQSLMWSR…KETASIALDL (112 aa)).

This sequence belongs to the methyltransferase superfamily. RlmKL family.

Its subcellular location is the cytoplasm. The catalysed reaction is guanosine(2445) in 23S rRNA + S-adenosyl-L-methionine = N(2)-methylguanosine(2445) in 23S rRNA + S-adenosyl-L-homocysteine + H(+). It carries out the reaction guanosine(2069) in 23S rRNA + S-adenosyl-L-methionine = N(2)-methylguanosine(2069) in 23S rRNA + S-adenosyl-L-homocysteine + H(+). Functionally, specifically methylates the guanine in position 2445 (m2G2445) and the guanine in position 2069 (m7G2069) of 23S rRNA. This is Ribosomal RNA large subunit methyltransferase K/L from Salmonella agona (strain SL483).